The primary structure comprises 219 residues: Orotate phosphoribosyltransferase (219 aa).

K26 serves as a coordination point for 5-phospho-alpha-D-ribose 1-diphosphate. 34 to 35 (FF) serves as a coordination point for orotate. Residues 72-73 (YK), R98, K99, K102, H104, and 124-132 (DDVITAGTA) each bind 5-phospho-alpha-D-ribose 1-diphosphate. Orotate contacts are provided by T128 and R156.

Belongs to the purine/pyrimidine phosphoribosyltransferase family. PyrE subfamily. As to quaternary structure, homodimer. The cofactor is Mg(2+).

It catalyses the reaction orotidine 5'-phosphate + diphosphate = orotate + 5-phospho-alpha-D-ribose 1-diphosphate. Its pathway is pyrimidine metabolism; UMP biosynthesis via de novo pathway; UMP from orotate: step 1/2. In terms of biological role, catalyzes the transfer of a ribosyl phosphate group from 5-phosphoribose 1-diphosphate to orotate, leading to the formation of orotidine monophosphate (OMP). The chain is Orotate phosphoribosyltransferase from Xylella fastidiosa (strain 9a5c).